The chain runs to 1534 residues: Alpha-2-macroglobulin homolog (1534 aa).

Positions 1–38 (MDTQRFQSQFHWHLSFKFSGAIAACLSLSLVGTGLANA) are cleaved as a signal peptide.

It belongs to the protease inhibitor I39 (alpha-2-macroglobulin) family. Bacterial alpha-2-macroglobulin subfamily.

The protein is Alpha-2-macroglobulin homolog (yfaS) of Escherichia coli O157:H7.